The sequence spans 400 residues: MTQFASPVLHSLLDTDAYKLHMQQAVFHHYYDVQVAAEFRCRGDDLLGIYADAIREQVDAMQHLRLQEDEFQWLSGLPFFKPDYLNWLREFRYNPDQVCVTNDNGKLHIRLTGPWREVIMWEVPLLAVISELVHHYRSPNAGVDQALDALESKLVDFTALTADLDMSRFHLMDFGTRRRFSREVQQAIVKRLQQESWFVGTSNYDLARRLALTPMGTQAHEWFQAHQQISPDLATSQRAALAAWLNEYPDQLGIALTDCITMDAFLRDFGIEFASRYQGLRHDSGDPVAWGEKAIAHYEKLGIDPLTKTLVFSDNLDLQKAVELYRHFASRVQLSFGIGTRLTCDIPQVKPLNIVIKLVECNGKPVAKLSDSPGKTICHDKAFVRALRKAFDLPQVRKAS.

At H220 the chain carries Phosphohistidine; by autocatalysis.

This sequence belongs to the NAPRTase family. Transiently phosphorylated on a His residue during the reaction cycle. Phosphorylation strongly increases the affinity for substrates and increases the rate of nicotinate D-ribonucleotide production. Dephosphorylation regenerates the low-affinity form of the enzyme, leading to product release.

It carries out the reaction nicotinate + 5-phospho-alpha-D-ribose 1-diphosphate + ATP + H2O = nicotinate beta-D-ribonucleotide + ADP + phosphate + diphosphate. It participates in cofactor biosynthesis; NAD(+) biosynthesis; nicotinate D-ribonucleotide from nicotinate: step 1/1. Its function is as follows. Catalyzes the synthesis of beta-nicotinate D-ribonucleotide from nicotinate and 5-phospho-D-ribose 1-phosphate at the expense of ATP. This is Nicotinate phosphoribosyltransferase from Salmonella heidelberg (strain SL476).